A 292-amino-acid polypeptide reads, in one-letter code: Outer membrane protein assembly factor BamD (292 aa).

An N-terminal signal peptide occupies residues 1-26; it reads MIQRPTFFTPTHLLAMLLATFVLITG. The N-palmitoyl cysteine moiety is linked to residue C27. C27 carries the S-diacylglycerol cysteine lipid modification.

Belongs to the BamD family. Part of the Bam complex.

It is found in the cell outer membrane. Part of the outer membrane protein assembly complex, which is involved in assembly and insertion of beta-barrel proteins into the outer membrane. The chain is Outer membrane protein assembly factor BamD from Xylella fastidiosa (strain 9a5c).